A 710-amino-acid chain; its full sequence is Polyribonucleotide nucleotidyltransferase (710 aa).

2 residues coordinate Mg(2+): Asp-487 and Asp-493. Residues 554–613 (PRIHTMKISAEKIKDVIGKGGAVIRALTEETGTTIEIEDDGTIKIAATEGAAAKEAIRRI) form the KH domain. The S1 motif domain occupies 623-691 (GRIYTGKVAR…RQGRVRLSMK (69 aa)). Residues 691 to 710 (KEAVEKPAEEANDASEAKGE) form a disordered region.

This sequence belongs to the polyribonucleotide nucleotidyltransferase family. Component of the RNA degradosome, which is a multiprotein complex involved in RNA processing and mRNA degradation. Mg(2+) is required as a cofactor.

The protein localises to the cytoplasm. The catalysed reaction is RNA(n+1) + phosphate = RNA(n) + a ribonucleoside 5'-diphosphate. Involved in mRNA degradation. Catalyzes the phosphorolysis of single-stranded polyribonucleotides processively in the 3'- to 5'-direction. This is Polyribonucleotide nucleotidyltransferase from Vibrio campbellii (strain ATCC BAA-1116).